The primary structure comprises 89 residues: Small ribosomal subunit protein uS15 (89 aa).

Residues 1–13 (MYLTSEKKEEIFS) are compositionally biased toward basic and acidic residues. The disordered stretch occupies residues 1-24 (MYLTSEKKEEIFSKHGKGKNDTGS).

Belongs to the universal ribosomal protein uS15 family. In terms of assembly, part of the 30S ribosomal subunit. Forms a bridge to the 50S subunit in the 70S ribosome, contacting the 23S rRNA.

In terms of biological role, one of the primary rRNA binding proteins, it binds directly to 16S rRNA where it helps nucleate assembly of the platform of the 30S subunit by binding and bridging several RNA helices of the 16S rRNA. Its function is as follows. Forms an intersubunit bridge (bridge B4) with the 23S rRNA of the 50S subunit in the ribosome. This is Small ribosomal subunit protein uS15 from Christiangramia forsetii (strain DSM 17595 / CGMCC 1.15422 / KT0803) (Gramella forsetii).